We begin with the raw amino-acid sequence, 443 residues long: 2-hydroxyethylphosphonate dioxygenase (443 aa).

Residues 8–63 (LAHWMNARKYTAAQTADLAGLPLDDLRRLLGDEANEPDPAAATALAEALSVEPSQL) enclose the HTH cro/C1-type 1 domain. Lysine 16 lines the substrate pocket. Residues 19–38 (AAQTADLAGLPLDDLRRLLG) constitute a DNA-binding region (H-T-H motif). 2 residues coordinate substrate: tyrosine 98 and asparagine 126. Histidine 129 contacts Fe cation. 3 residues coordinate substrate: glutamate 176, histidine 182, and serine 196. Histidine 182 contacts Fe cation. One can recognise an HTH cro/C1-type 2 domain in the interval 234 to 290 (VLDLFLARRAHTRTSAAEAAGVPPADLEAALRSPASETGLTVLRTLGRALGFDYRVL). The H-T-H motif DNA-binding region spans 245 to 265 (TRTSAAEAAGVPPADLEAALR).

Belongs to the non-heme iron-dependent dioxygenase family. Homodimer. Requires Fe(2+) as cofactor.

The catalysed reaction is 2-hydroxyethylphosphonate + O2 = hydroxymethylphosphonate + formate + H(+). The protein operates within secondary metabolite biosynthesis; bialaphos biosynthesis. In terms of biological role, non-heme-dependent dioxygenase that catalyzes the conversion of 2-hydroxyethylphosphonate (HEP) to hydroxymethylphosphonate (HMP) in the biosynthesis of phosphinothricin tripeptide (PTT), also known as bialaphos (BA), a natural-product antibiotic and potent herbicide. PTT contains the unusual amino acid phosphinothricin attached to 2 alanine residues. Synthetic phosphinothricin (glufosinate) is a key component of commercial herbicides. The protein is 2-hydroxyethylphosphonate dioxygenase (hepD) of Streptomyces viridochromogenes (strain DSM 40736 / JCM 4977 / BCRC 1201 / Tue 494).